Reading from the N-terminus, the 249-residue chain is Chitooligosaccharide deacetylase (249 aa).

Mg(2+)-binding residues include His-61 and His-125.

It belongs to the YdjC deacetylase family. ChbG subfamily. Homodimer. The cofactor is Mg(2+).

The protein resides in the cytoplasm. It catalyses the reaction N,N'-diacetylchitobiose + H2O = N-acetyl-beta-D-glucosaminyl-(1-&gt;4)-D-glucosamine + acetate. It carries out the reaction diacetylchitobiose-6'-phosphate + H2O = N'-monoacetylchitobiose-6'-phosphate + acetate. The protein operates within glycan degradation; chitin degradation. Functionally, involved in the degradation of chitin. ChbG is essential for growth on the acetylated chitooligosaccharides chitobiose and chitotriose but is dispensable for growth on cellobiose and chitosan dimer, the deacetylated form of chitobiose. Deacetylation of chitobiose-6-P and chitotriose-6-P is necessary for both the activation of the chb promoter by the regulatory protein ChbR and the hydrolysis of phosphorylated beta-glucosides by the phospho-beta-glucosidase ChbF. Catalyzes the removal of only one acetyl group from chitobiose-6-P to yield monoacetylchitobiose-6-P, the inducer of ChbR and the substrate of ChbF. The protein is Chitooligosaccharide deacetylase of Escherichia coli (strain K12 / MC4100 / BW2952).